The chain runs to 759 residues: Olfactomedin-like protein 2B (759 aa).

The first 20 residues, 1-20 (MAKSLLLVLCFALVTTLGWG), serve as a signal peptide directing secretion. Coiled coils occupy residues 40–68 (TEDE…KVKA) and 179–209 (KLEE…MNKR). N-linked (GlcNAc...) asparagine glycosylation is found at Asn-187 and Asn-213. 2 disordered regions span residues 346-396 (TRRP…VSAS) and 456-494 (THTA…EEED). A compositionally biased stretch (low complexity) spans 356 to 396 (AAVTADAGTTSAGTPTTALPSARLPASTAAPSTPDPAVSAS). An Olfactomedin-like domain is found at 502-759 (RCKDTLSTIT…QVTYHVIFAY (258 aa)). Cys-503 and Cys-689 are oxidised to a cystine. Asn-704 carries an N-linked (GlcNAc...) asparagine glycan.

In terms of assembly, homodimer. Binds to heparin and chondroitin sulfate E. In terms of processing, O-glycosylated and N-glycosylated.

Its subcellular location is the secreted. This is Olfactomedin-like protein 2B (OLFML2B) from Bos taurus (Bovine).